The primary structure comprises 156 residues: Protein-export protein SecB (156 aa).

This sequence belongs to the SecB family. In terms of assembly, homotetramer, a dimer of dimers. One homotetramer interacts with 1 SecA dimer.

The protein localises to the cytoplasm. Its function is as follows. One of the proteins required for the normal export of preproteins out of the cell cytoplasm. It is a molecular chaperone that binds to a subset of precursor proteins, maintaining them in a translocation-competent state. It also specifically binds to its receptor SecA. The protein is Protein-export protein SecB of Paraburkholderia xenovorans (strain LB400).